The chain runs to 84 residues: Sec-independent protein translocase protein TatA (84 aa).

A helical transmembrane segment spans residues Met1–Gly21. The tract at residues Lys40 to Ser84 is disordered. The span at Asp69–Ser84 shows a compositional bias: basic and acidic residues.

This sequence belongs to the TatA/E family. In terms of assembly, the Tat system comprises two distinct complexes: a TatABC complex, containing multiple copies of TatA, TatB and TatC subunits, and a separate TatA complex, containing only TatA subunits. Substrates initially bind to the TatABC complex, which probably triggers association of the separate TatA complex to form the active translocon.

It is found in the cell inner membrane. Part of the twin-arginine translocation (Tat) system that transports large folded proteins containing a characteristic twin-arginine motif in their signal peptide across membranes. TatA could form the protein-conducting channel of the Tat system. The protein is Sec-independent protein translocase protein TatA of Polaromonas naphthalenivorans (strain CJ2).